The chain runs to 485 residues: Protein nucleotidyltransferase YdiU (485 aa).

The ATP site is built by glycine 85, glycine 87, arginine 88, lysine 108, aspartate 120, glycine 121, arginine 171, and arginine 178. Aspartate 249 (proton acceptor) is an active-site residue. 2 residues coordinate Mg(2+): asparagine 250 and aspartate 259. Residue aspartate 259 coordinates ATP. The interval 462-485 is disordered; the sequence is LPTTPNYQDPPADGDRSYQTFCGT.

Belongs to the SELO family. It depends on Mg(2+) as a cofactor. Mn(2+) is required as a cofactor.

It catalyses the reaction L-seryl-[protein] + ATP = 3-O-(5'-adenylyl)-L-seryl-[protein] + diphosphate. The enzyme catalyses L-threonyl-[protein] + ATP = 3-O-(5'-adenylyl)-L-threonyl-[protein] + diphosphate. The catalysed reaction is L-tyrosyl-[protein] + ATP = O-(5'-adenylyl)-L-tyrosyl-[protein] + diphosphate. It carries out the reaction L-histidyl-[protein] + UTP = N(tele)-(5'-uridylyl)-L-histidyl-[protein] + diphosphate. It catalyses the reaction L-seryl-[protein] + UTP = O-(5'-uridylyl)-L-seryl-[protein] + diphosphate. The enzyme catalyses L-tyrosyl-[protein] + UTP = O-(5'-uridylyl)-L-tyrosyl-[protein] + diphosphate. Nucleotidyltransferase involved in the post-translational modification of proteins. It can catalyze the addition of adenosine monophosphate (AMP) or uridine monophosphate (UMP) to a protein, resulting in modifications known as AMPylation and UMPylation. In Teredinibacter turnerae (strain ATCC 39867 / T7901), this protein is Protein nucleotidyltransferase YdiU.